The sequence spans 568 residues: CRISPR-associated exonuclease Cas4/endonuclease Cas1 fusion (568 aa).

The segment at 1 to 209 (MSVVVTRYRG…KCSLAPVCLP (209 aa)) is CRISPR-associated exonuclease Cas4. Cys-43 serves as a coordination point for [4Fe-4S] cluster. Residues Asp-95 and Glu-108 each coordinate Mn(2+). 3 residues coordinate [4Fe-4S] cluster: Cys-198, Cys-201, and Cys-207. The segment at 232–568 (VLHVATPGTR…PGLFATFRLR (337 aa)) is CRISPR-associated endonuclease Cas1. Residues Glu-390, His-459, and Glu-474 each contribute to the Mn(2+) site.

In the N-terminal section; belongs to the CRISPR-associated exonuclease Cas4 family. This sequence in the C-terminal section; belongs to the CRISPR-associated endonuclease Cas1 family. Homodimer, forms a heterotetramer with a Cas2 homodimer. The cofactor is [4Fe-4S] cluster. Requires Mg(2+) as cofactor. Mn(2+) serves as cofactor.

It carries out the reaction exonucleolytic cleavage in the 5'- to 3'-direction to yield nucleoside 3'-phosphates.. Functionally, CRISPR (clustered regularly interspaced short palindromic repeat), is an adaptive immune system that provides protection against mobile genetic elements (viruses, transposable elements and conjugative plasmids). CRISPR clusters contain spacers, sequences complementary to antecedent mobile elements, and target invading nucleic acids. CRISPR clusters are transcribed and processed into CRISPR RNA (crRNA). The Cas4 region acts as a ssDNA exonuclease, while the Cas1 region acts as a dsDNA endonuclease. Involved in the integration of spacer DNA into the CRISPR cassette. The protein is CRISPR-associated exonuclease Cas4/endonuclease Cas1 fusion (cas4-cas1) of Myxococcus xanthus (strain DK1622).